Here is a 504-residue protein sequence, read N- to C-terminus: Lysine--tRNA ligase (504 aa).

The Mg(2+) site is built by E414 and E421.

It belongs to the class-II aminoacyl-tRNA synthetase family. Homodimer. Requires Mg(2+) as cofactor.

Its subcellular location is the cytoplasm. The catalysed reaction is tRNA(Lys) + L-lysine + ATP = L-lysyl-tRNA(Lys) + AMP + diphosphate. In Photorhabdus laumondii subsp. laumondii (strain DSM 15139 / CIP 105565 / TT01) (Photorhabdus luminescens subsp. laumondii), this protein is Lysine--tRNA ligase.